The primary structure comprises 787 residues: Protein translocase subunit SecA (787 aa).

ATP is bound by residues Q85, 103-107, and D492; that span reads GEGKT.

Belongs to the SecA family. As to quaternary structure, monomer and homodimer. Part of the essential Sec protein translocation apparatus which comprises SecA, SecYEG and auxiliary proteins SecDF. Other proteins may also be involved.

It localises to the cell membrane. The protein resides in the cytoplasm. It carries out the reaction ATP + H2O + cellular proteinSide 1 = ADP + phosphate + cellular proteinSide 2.. Functionally, part of the Sec protein translocase complex. Interacts with the SecYEG preprotein conducting channel. Has a central role in coupling the hydrolysis of ATP to the transfer of proteins into and across the cell membrane, serving as an ATP-driven molecular motor driving the stepwise translocation of polypeptide chains across the membrane. The sequence is that of Protein translocase subunit SecA from Limosilactobacillus reuteri (strain DSM 20016) (Lactobacillus reuteri).